Reading from the N-terminus, the 339-residue chain is Centromere protein N (339 aa).

3 positions are modified to phosphoserine: Ser226, Ser235, and Ser282.

The protein belongs to the CENP-N/CHL4 family. Component of the CENPA-NAC complex, at least composed of CENPA, CENPC, CENPH, CENPM, CENPN, CENPT and CENPU. The CENPA-NAC complex interacts with the CENPA-CAD complex, composed of CENPI, CENPK, CENPL, CENPO, CENPP, CENPQ, CENPR and CENPS. Interacts directly with CENPA. Identified in a centromere complex containing histones H2A, H2B and H4, and at least CENPA, CENPB, CENPC, CENPT, CENPN, HJURP, SUPT16H, SSRP1 and RSF1.

Its subcellular location is the nucleus. The protein localises to the chromosome. It is found in the centromere. The protein resides in the kinetochore. In terms of biological role, component of the CENPA-NAC (nucleosome-associated) complex, a complex that plays a central role in assembly of kinetochore proteins, mitotic progression and chromosome segregation. The CENPA-NAC complex recruits the CENPA-CAD (nucleosome distal) complex and may be involved in incorporation of newly synthesized CENPA into centromeres. CENPN is the first protein to bind specifically to CENPA nucleosomes and the direct binding of CENPA nucleosomes by CENPN is required for centromere assembly. Required for chromosome congression and efficiently align the chromosomes on a metaphase plate. The sequence is that of Centromere protein N (CENPN) from Homo sapiens (Human).